Here is a 220-residue protein sequence, read N- to C-terminus: Fructose-6-phosphate aldolase 1 (220 aa).

Residue lysine 85 is the Schiff-base intermediate with substrate of the active site.

This sequence belongs to the transaldolase family. Type 3A subfamily. Homodecamer.

It is found in the cytoplasm. It catalyses the reaction beta-D-fructose 6-phosphate = dihydroxyacetone + D-glyceraldehyde 3-phosphate. In terms of biological role, catalyzes the reversible formation of fructose 6-phosphate from dihydroxyacetone and D-glyceraldehyde 3-phosphate via an aldolization reaction. This chain is Fructose-6-phosphate aldolase 1 (fsaA), found in Escherichia coli O157:H7.